Reading from the N-terminus, the 80-residue chain is NAD(P)H-quinone oxidoreductase subunit O (80 aa).

This sequence belongs to the complex I NdhO subunit family. NDH-1 can be composed of about 15 different subunits; different subcomplexes with different compositions have been identified which probably have different functions.

It is found in the cellular thylakoid membrane. It carries out the reaction a plastoquinone + NADH + (n+1) H(+)(in) = a plastoquinol + NAD(+) + n H(+)(out). The catalysed reaction is a plastoquinone + NADPH + (n+1) H(+)(in) = a plastoquinol + NADP(+) + n H(+)(out). NDH-1 shuttles electrons from an unknown electron donor, via FMN and iron-sulfur (Fe-S) centers, to quinones in the respiratory and/or the photosynthetic chain. The immediate electron acceptor for the enzyme in this species is believed to be plastoquinone. Couples the redox reaction to proton translocation, and thus conserves the redox energy in a proton gradient. Cyanobacterial NDH-1 also plays a role in inorganic carbon-concentration. This is NAD(P)H-quinone oxidoreductase subunit O from Prochlorococcus marinus subsp. pastoris (strain CCMP1986 / NIES-2087 / MED4).